A 93-amino-acid polypeptide reads, in one-letter code: DNA/RNA-binding protein Alba 2 (93 aa).

This sequence belongs to the histone-like Alba family.

The protein resides in the cytoplasm. It localises to the chromosome. In terms of biological role, binds double-stranded DNA tightly but without sequence specificity. Involved in DNA compaction. The chain is DNA/RNA-binding protein Alba 2 from Methanopyrus kandleri (strain AV19 / DSM 6324 / JCM 9639 / NBRC 100938).